We begin with the raw amino-acid sequence, 373 residues long: MPLINLPEFATELLSEFDARNAERIDTPVIQPAEPFLDIAGEDLRRRIFMTESETGASLCLRPEFTIPVCLRHIETATGTPKRYAYLGEVFRQRRDGANEFYQAGIEDLGDINIPSADARAIGDATGILARLLPGRRLSVTLGDQAVFEAVVQALGLPLGWQKRLIHAFGNMTQLEALLAGLVSPQFVTGLDDDIARLIASGDEQALIAHIEQEMQATGYSTNASRSPLEIARRLKEKLILSETRLDDAAFHVLEEFLSLHVPLVNASAALAGFADAAGLKLGNALSRFNGRVGALADAGVDLSCLDYRAAFGRPLDYYTGLVFEVTVEGSSAVLAGGGRFDRLLTFLGAMDRIPAVGFSFWLDRIETERAAA.

This sequence belongs to the class-II aminoacyl-tRNA synthetase family. HisZ subfamily. As to quaternary structure, heteromultimer composed of HisG and HisZ subunits.

It is found in the cytoplasm. The protein operates within amino-acid biosynthesis; L-histidine biosynthesis; L-histidine from 5-phospho-alpha-D-ribose 1-diphosphate: step 1/9. In terms of biological role, required for the first step of histidine biosynthesis. May allow the feedback regulation of ATP phosphoribosyltransferase activity by histidine. This Rhizobium etli (strain ATCC 51251 / DSM 11541 / JCM 21823 / NBRC 15573 / CFN 42) protein is ATP phosphoribosyltransferase regulatory subunit.